Reading from the N-terminus, the 209-residue chain is MISTSQIPDSFVSPCRRASVSRTTKETDVQVTIDLDGSGNCRAQTGIPFLDHMLQQIASHAAIDLDVRATGDIEIDDHHTNEDVGITLGQALLQALGDKKGIVRFGHFVAPLDEALVQVALDFSGRPHLSYGLEIPTQRVGTYDTQLVREFFVALVNHSQMTLHIRQLDGINSHHIIEATFKAFARAMSMAIAIDPRRAGIIPSSKGVL.

Belongs to the imidazoleglycerol-phosphate dehydratase family.

The protein resides in the cytoplasm. It catalyses the reaction D-erythro-1-(imidazol-4-yl)glycerol 3-phosphate = 3-(imidazol-4-yl)-2-oxopropyl phosphate + H2O. Its pathway is amino-acid biosynthesis; L-histidine biosynthesis; L-histidine from 5-phospho-alpha-D-ribose 1-diphosphate: step 6/9. The sequence is that of Imidazoleglycerol-phosphate dehydratase from Microcystis aeruginosa (strain NIES-843 / IAM M-2473).